The sequence spans 1077 residues: MGPTCSSNFLRFANLTAEMQSLEINILKGYPYEHPTMIDMVTRSPQNLAQNLVSLLRGFEWGQVGAVLCEECYEGDELASEIYFSTIEDIFENNNIALKETVRIGKRENSVNISDAITIFEPSARVILLFLGNKLNDYTEFMTAMSMNNYTTEEYTPVIVISKNSLELTFPWKENDAIAELFDKAIIVYNNCYDKSKISSFLSSYSFSTIEETIISLQMYEGYHLLGYYLYTAITNTTLFNYVQPEKAISSMSIPGPFGEIFINSNGQRIAGYDVLVVDKSLNSNNFIMPLGTISTDKKCPDQACLNFVLNSTSSFEPLKDVPLCGFHGEICDQTGVIIAIAVIMGVLLMFIIILTTIRKCCNGSKGRSISNPWVIPFQDVRFIDLTNTEGSQHMSIQSLQRNMEEKQRLQSLARTKHIATVDQVYVLADKYVMRDKLRYDKIDINLLYQMKSHLQHDNLNSFVGITIDKASHMYIIWNQCFRGSLHDHIFTKERQRGTATRFEGLFLRDILKGLEYIHASAIDFHGNLTLHNCMLDSHWIVKLSGFGVNRLLVKWKTSGQIFTEDHTPVIKSEELHYFDPAMKKIWKNYADRNERALITPQFGKKCDMYSFGVILHEIILKKKFVEQLFDSPREEDDSVLIDDENDAIASRFPLPIIIPEGIEMHNDLIKMLENCFGSVRPDIALARKIIDTVLKMSGSLVDLMIKNLTAYTQGLNETVKNRTAELEKEQEKGDQLLMELLPKSVANDLKNGIAVDPKVYENATILYSDIVGFTSLCSQSQPMEVVTLLSGMYQRFDLIISQQGGYKMETIGDAYCVAAGLPVVMEKDHVKSICMIALLQRDCLHHFEIPHRPGTFLNCRWGFNSGPVFAGVIGQKAPRYACFGEAVILASKMESSGVEDRIQMTLASQQLLEENFPQFVCSNRGGRTIEGIGRILTYWLEGVNAGEQVKVVEFQNDLNDELSRIMKKDGELLAAATALKPKDKMTLAKEKVIAERKNEEERLQRQQTLQEALEEHEEEIEMNEVLVDEDEGEGKPKEVDLTSIVSTQMEELEDEPAGRTIGHGRLDSQASTIPDN.

N-linked (GlcNAc...) asparagine glycans are attached at residues Asn-14, Asn-112, Asn-149, and Asn-311. Residues 335–355 (TGVIIAIAVIMGVLLMFIIIL) traverse the membrane as a helical segment. The 341-residue stretch at 355-695 (LTTIRKCCNG…LARKIIDTVL (341 aa)) folds into the Protein kinase domain. Residues 356-1077 (TTIRKCCNGS…DSQASTIPDN (722 aa)) lie on the Cytoplasmic side of the membrane. The Guanylate cyclase domain maps to 765-895 (TILYSDIVGF…EAVILASKME (131 aa)). Residues Asp-770, Ile-771, and Asp-814 each contribute to the Mg(2+) site. Residues 983–1034 (KDKMTLAKEKVIAERKNEEERLQRQQTLQEALEEHEEEIEMNEVLVDEDEGE) are a coiled coil. A disordered region spans residues 1048–1077 (TQMEELEDEPAGRTIGHGRLDSQASTIPDN).

This sequence belongs to the adenylyl cyclase class-4/guanylyl cyclase family. Expressed in sensory neurons including ASI, ASJ, ASK, AWB and AWC. Expressed in ASJ neurons in the dauer stage.

It localises to the cell membrane. It is found in the cell projection. The protein resides in the dendrite. Its subcellular location is the cilium. The protein localises to the perikaryon. The catalysed reaction is GTP = 3',5'-cyclic GMP + diphosphate. Its function is as follows. Guanylate cyclase involved in the production of the second messenger cGMP. In addition, regulates cGMP levels by controlling the transcription of 3',5'-cyclic phosphodiesterase pde-1 and pde-5 mRNAs. Involved in the olfactory, light and pheromone sensing pathways. Part of the chemosensory mechanism of the ASJ sensory neuron that controls dauer formation and dauer recovery. Promotes the calcium flux in ASJ sensory neurons in response to onset and removal of a nitric oxide (NO) stimulus and is thereby required for the behavioral avoidance response to NO-producing organisms like P.aeruginosa. In ASI and ASJ sensory neurons, controls dauer formation and behavioral response to P.aeruginosa by up-regulating the transcription of daf-7, a member of the TGF-beta family. Required for the chemotaxis responses to non-volatile and volatile attractants mediated by the sensory neurons ASE and AWC respectively. Required in ASJ neurons for phototransduction downstream of G protein coupled-photoreceptor lite-1. Plays a role in the development of ASJ sensory neuron axons during late larval stages and in the maintenance of normal axon morphology in adults. Required to maintain the expression of putative olfactory receptor str-2 in one of the two AWC neurons in adults. Regulates, via the production of cGMP, lifespan (in some environmental conditions), sensitivity to oxidative stress and entry into quiescence triggered by satiety. In AWB and AWC sensory neurons, mediates the recognition of food odors which subsequently allows for the detection of preferred food sources. This chain is Receptor-type guanylate cyclase daf-11, found in Caenorhabditis elegans.